Reading from the N-terminus, the 154-residue chain is Ascorbate-specific PTS system EIIA component (154 aa).

The PTS EIIA type-2 domain maps to 6–150 (SLAENKSIRL…QEVLDLIDRT (145 aa)). Histidine 68 acts as the Tele-phosphohistidine intermediate in catalysis. At histidine 68 the chain carries Phosphohistidine.

Its subcellular location is the cytoplasm. In terms of biological role, the phosphoenolpyruvate-dependent sugar phosphotransferase system (sugar PTS), a major carbohydrate active transport system, catalyzes the phosphorylation of incoming sugar substrates concomitantly with their translocation across the cell membrane. The enzyme II UlaABC PTS system is involved in ascorbate transport. The chain is Ascorbate-specific PTS system EIIA component (ulaC) from Shigella flexneri.